A 1153-amino-acid chain; its full sequence is Nitric oxide synthase, inducible (1153 aa).

The short motif at 23–27 (DINNN) is the DINNN-motif; mediates interaction with SPSB1, SPSB2 and SPSB4 element. The Zn(2+) site is built by Cys110 and Cys115. Ser118 serves as a coordination point for (6R)-L-erythro-5,6,7,8-tetrahydrobiopterin. Residue Cys200 participates in heme b binding. Phosphoserine; by PKA is present on Ser234. Residues Gln263, Trp372, Tyr373, and Glu377 each contribute to the L-arginine site. 4 residues coordinate (6R)-L-erythro-5,6,7,8-tetrahydrobiopterin: Arg381, Ile462, Trp463, and Phe476. Tyr491 serves as a coordination point for heme b. A calmodulin-binding region spans residues 515 to 535 (LKVLVKAVLFACMLMRKTMAS). Residues 539–677 (VTILFATETG…AFRSWAVQTF (139 aa)) form the Flavodoxin-like domain. 5 residues coordinate FMN: Thr545, Glu546, Thr547, Lys549, and Ser550. At Tyr575 the chain carries Phosphotyrosine. Ser578 is subject to Phosphoserine; by PKA. Ser591, Thr592, Ser628, Arg633, Cys635, Glu661, and Gln665 together coordinate FMN. Residues 730–970 (KNVFTMRLKS…VRNASGFHLP (241 aa)) enclose the FAD-binding FR-type domain. Position 750 (Arg750) interacts with NADP(+). His772 is a binding site for FAD. Ser892 carries the post-translational modification Phosphoserine; by PKA. The FAD site is built by Arg906, Tyr908, Ser909, Thr924, and Ala926. Thr929 lines the NADP(+) pocket. FAD is bound by residues Tyr930, Val943, Cys944, and Ser945. NADP(+)-binding residues include Thr984, Arg1017, Ser1046, Arg1047, Lys1053, Tyr1055, Gln1057, and Asp1090.

The protein belongs to the NOS family. As to quaternary structure, homodimer. Interacts with NHERF1. Interacts with GAPDH; induced by oxidatively-modified low-densitity lipoprotein (LDL(ox)). Interacts with S100A8 and S100A9 to form the iNOS-S100A8/9 transnitrosylase complex. Interacts with SPSB1, SPSB2 and SPSB4. Interacts with ELOC and CUL5 in the presence of SPSB1 or SPSB2 or SPSB4. Forms a complex with ASL, ASS1 and HSP90AA1; the complex regulates cell-autonomous L-arginine synthesis and citrulline recycling while channeling extracellular L-arginine to nitric oxide synthesis pathway. Requires heme b as cofactor. FAD serves as cofactor. FMN is required as a cofactor. The cofactor is (6R)-L-erythro-5,6,7,8-tetrahydrobiopterin. Polyubiquitinated; mediated by SPSB1, SPSB2 and SPSB4, leading to proteasomal degradation. In terms of tissue distribution, expressed in the liver, retina, bone cells and airway epithelial cells of the lung. Not expressed in the platelets. Expressed in chondrocytes.

The protein resides in the cytoplasm. The protein localises to the cytosol. It carries out the reaction 2 L-arginine + 3 NADPH + 4 O2 + H(+) = 2 L-citrulline + 2 nitric oxide + 3 NADP(+) + 4 H2O. With respect to regulation, regulated by calcium/calmodulin. Aspirin inhibits expression and function of this enzyme and effects may be exerted at the level of translational/post-translational modification and directly on the catalytic activity. In terms of biological role, produces nitric oxide (NO) which is a messenger molecule with diverse functions throughout the body. In macrophages, NO mediates tumoricidal and bactericidal actions. Also has nitrosylase activity and mediates cysteine S-nitrosylation of cytoplasmic target proteins such PTGS2/COX2. As component of the iNOS-S100A8/9 transnitrosylase complex involved in the selective inflammatory stimulus-dependent S-nitrosylation of GAPDH on 'Cys-247' implicated in regulation of the GAIT complex activity and probably multiple targets including ANXA5, EZR, MSN and VIM. Involved in inflammation, enhances the synthesis of pro-inflammatory mediators such as IL6 and IL8. The protein is Nitric oxide synthase, inducible of Homo sapiens (Human).